The chain runs to 140 residues: Short-chain diamines transporter (140 aa).

The next 4 membrane-spanning stretches (helical) occupy residues 7 to 27, 36 to 56, 79 to 99, and 105 to 125; these read IFHA…AAAL, LALV…IYNL, VGFE…FLEI, and LMLE…FNWL.

It belongs to the proteobacterial antimicrobial compound efflux (PACE) (TC 2.A.117) family.

It is found in the cell inner membrane. Its function is as follows. Mediates the efflux of short-chain diamines when energized by an electrochemical gradient. Confers resistance to chlorhexidine, benzalkonium, proflavine and acriflavine. Mediates efflux of both proflavine and acriflavine via an energy-dependent mechanism. The polypeptide is Short-chain diamines transporter (Vibrio parahaemolyticus serotype O3:K6 (strain RIMD 2210633)).